A 486-amino-acid polypeptide reads, in one-letter code: MAALSFSPSPPPKENPKENPNPGIKTTLKPFGKITVHNVLSESGANALQQHIANQNTIIRKIRDFGMLGAVQSAAASTTNTTPISSQRKRPLGESQKQNRHNQQNQQLSKTSVPAKKCKTNKKLAVERPPKAGTISHPHKSQSDQSFGTPGRKGLPLPQAVARRNARERNRVKQVNNGFALLREKIPEEVSEAFEAQGAGRGASKKLSKVETLRMAVEYIRSLEKLLGFDFPPLNSQGNSSGSGDDSFMFIKDEFDCLDEHFDDSLSNYEMDEQQTVQQTLSEDMLNPPQASDLLPSLTTLNGLQYIRIPGTNTYQLLTTDLLGDLSHEQKLEETAASGQLSRSPVPQKVVRSPCSSPVSPVASTELLLQTQTCATPLQQQVIKQEYVSTNISSSSNAQTSPQQQQQVQNLGSSPILPAFYDQEPVSFYDNVVLPGFKKEFSDILQQDQPNNTTAGCLSDESMIDAIDWWEAHAPKSNGACTNLSV.

Disordered regions lie at residues 1 to 26 (MAAL…GIKT) and 75 to 158 (AAST…LPLP). Over residues 75–86 (AASTTNTTPISS) the composition is skewed to polar residues. The bHLH domain occupies 159-223 (QAVARRNARE…RMAVEYIRSL (65 aa)).

As to quaternary structure, efficient DNA binding requires dimerization with another bHLH protein. As to expression, l(1)SC, SC and AC strongly label the presumptive stomatogastric nervous system, while ASE is more prominent in the presumptive procephalic lobe.

Involved in the determination of the neuronal precursors of optic lobes in the central nervous system. This Drosophila melanogaster (Fruit fly) protein is Achaete-scute complex protein T8 (ase).